Consider the following 216-residue polypeptide: Heart- and neural crest derivatives-expressed protein 1 (216 aa).

3 disordered regions span residues Met-1–His-20, Ala-53–Ser-109, and Glu-165–Thr-203. Over residues Ala-8–Pro-18 the composition is skewed to basic residues. Residues Thr-65–Pro-78 show a composition bias toward low complexity. Basic residues predominate over residues Leu-92 to Arg-104. Residues Lys-94–Leu-146 enclose the bHLH domain. The residue at position 107 (Thr-107) is a Phosphothreonine; by PLK4. At Ser-109 the chain carries Phosphoserine; by PLK4. A compositionally biased stretch (basic and acidic residues) spans Glu-165 to Glu-174.

Efficient DNA binding requires dimerization with another bHLH protein. Forms homodimers and heterodimers with TCF3 gene products E12 and E47, HAND2 and HEY1, HEY2 and HEYL (hairy-related transcription factors). Interacts with MDFIC. Interacts with SOX15; the interaction enhances HAND1-induced differentiation of trophoblast giant cells. Post-translationally, phosphorylation by PLK4 disrupts the interaction with MDFIC and leads to translocation into the nucleoplasm, allowing dimerization and transcription factor activity. As to expression, smooth muscle cells of the gut and adrenal tissue.

The protein localises to the nucleus. The protein resides in the nucleoplasm. Its subcellular location is the nucleolus. Its function is as follows. Transcription factor that plays an essential role in both trophoblast giant cell differentiation and in cardiac morphogenesis. Binds the DNA sequence 5'-NRTCTG-3' (non-canonical E-box). Acts as a transcriptional repressor of SOX15. In the adult, could be required for ongoing expression of cardiac-specific genes. The protein is Heart- and neural crest derivatives-expressed protein 1 (Hand1) of Mus musculus (Mouse).